We begin with the raw amino-acid sequence, 308 residues long: Reticulon-like protein 1 (308 aa).

2 stretches are compositionally biased toward polar residues: residues M1 to A17 and P41 to I66. Disordered regions lie at residues M1–A22 and P41–S92. A glycan (N-linked (GlcNAc...) asparagine) is linked at N65. The segment covering S67–P81 has biased composition (low complexity). N113 and N135 each carry an N-linked (GlcNAc...) asparagine glycan. The Reticulon domain maps to L127 to K308. A run of 4 helical transmembrane segments spans residues C138–L158, F166–G186, P233–L253, and Y255–C275. N-linked (GlcNAc...) asparagine glycosylation is present at N303.

Interacts with TTS1 and YOP1.

The protein localises to the endoplasmic reticulum membrane. It localises to the nucleus membrane. Functionally, required for the correct positioning of the cellular division plane by delimiting the actomyosin ring assembly at the cell equator. Overexpression causes cell lysis. This chain is Reticulon-like protein 1 (rtn1), found in Schizosaccharomyces pombe (strain 972 / ATCC 24843) (Fission yeast).